A 175-amino-acid chain; its full sequence is Peptide deformylase (175 aa).

Cysteine 96 and histidine 138 together coordinate Fe cation. Residue glutamate 139 is part of the active site. Histidine 142 serves as a coordination point for Fe cation.

The protein belongs to the polypeptide deformylase family. Fe(2+) is required as a cofactor.

The catalysed reaction is N-terminal N-formyl-L-methionyl-[peptide] + H2O = N-terminal L-methionyl-[peptide] + formate. Removes the formyl group from the N-terminal Met of newly synthesized proteins. Requires at least a dipeptide for an efficient rate of reaction. N-terminal L-methionine is a prerequisite for activity but the enzyme has broad specificity at other positions. The chain is Peptide deformylase from Helicobacter pylori (strain Shi470).